A 138-amino-acid polypeptide reads, in one-letter code: 10 kDa chaperonin 1, chloroplastic (138 aa).

Residues 1-61 constitute a chloroplast transit peptide; it reads MASSFITVPK…VPQADRVLVR (61 aa). Positions 50 to 137 are cpn-10 domain; it reads KVVPQADRVL…CKESDLLAIV (88 aa).

The protein belongs to the GroES chaperonin family. As to expression, expressed at low levels in germinating seeds, seedlings, rosettes leaves, flowers and siliques.

The protein resides in the plastid. Its subcellular location is the chloroplast. Functions as a co-chaperone for protein folding in chloroplasts. This chain is 10 kDa chaperonin 1, chloroplastic, found in Arabidopsis thaliana (Mouse-ear cress).